A 200-amino-acid polypeptide reads, in one-letter code: Gamma-glutamyl-CDP-amidate hydrolase (200 aa).

One can recognise a Glutamine amidotransferase type-1 domain in the interval 20–200 (ECLALDWGKL…LKEWFSLIKE (181 aa)). Cys-101 (nucleophile) is an active-site residue. Residues His-178 and Glu-180 contribute to the active site.

The enzyme catalyses N(5)-(cytidine 5'-diphosphoramidyl)-L-glutamine + H2O = cytidine 5'-diphosphoramidate + L-glutamate + H(+). It participates in capsule biogenesis; capsule polysaccharide biosynthesis. Involved in the biosynthesis of the O-methyl phosphoramidate (MeOPN) group found on the capsular polysaccharide (CPS) of C.jejuni. Catalyzes the hydrolysis of CDP-L-glutamine to L-glutamate and cytidine diphosphoramidate. This chain is Gamma-glutamyl-CDP-amidate hydrolase, found in Campylobacter jejuni subsp. jejuni serotype O:2 (strain ATCC 700819 / NCTC 11168).